The following is a 317-amino-acid chain: Probable deoxyhypusine synthase (317 aa).

Catalysis depends on Lys285, which acts as the Nucleophile.

It belongs to the deoxyhypusine synthase family. NAD(+) is required as a cofactor.

The enzyme catalyses [eIF5A protein]-L-lysine + spermidine = [eIF5A protein]-deoxyhypusine + propane-1,3-diamine. The protein operates within protein modification; eIF5A hypusination. Functionally, catalyzes the NAD-dependent oxidative cleavage of spermidine and the subsequent transfer of the butylamine moiety of spermidine to the epsilon-amino group of a specific lysine residue of the eIF-5A precursor protein to form the intermediate deoxyhypusine residue. The polypeptide is Probable deoxyhypusine synthase (dys) (Methanosarcina thermophila).